The primary structure comprises 81 residues: Protein translocase subunit SecE (81 aa).

A helical transmembrane segment spans residues 50–70; it reads VAVILMVILVSTVIYFVDQIF.

This sequence belongs to the SecE/SEC61-gamma family. Component of the Sec protein translocase complex. Heterotrimer consisting of SecY, SecE and SecG subunits. The heterotrimers can form oligomers, although 1 heterotrimer is thought to be able to translocate proteins. Interacts with the ribosome. Interacts with SecDF, and other proteins may be involved. Interacts with SecA.

The protein localises to the cell inner membrane. Its subcellular location is the cellular thylakoid membrane. Essential subunit of the Sec protein translocation channel SecYEG. Clamps together the 2 halves of SecY. May contact the channel plug during translocation. In Synechocystis sp. (strain ATCC 27184 / PCC 6803 / Kazusa), this protein is Protein translocase subunit SecE.